The sequence spans 72 residues: Putative transmembrane protein DDB_G0272126 (72 aa).

Transmembrane regions (helical) follow at residues 6 to 26 (KIIKSSYTLLSFFYFIANTII) and 38 to 58 (IILVSLYYLVFSLFITRIFYG).

Its subcellular location is the membrane. This chain is Putative transmembrane protein DDB_G0272126, found in Dictyostelium discoideum (Social amoeba).